Reading from the N-terminus, the 306-residue chain is Oxygen-dependent coproporphyrinogen-III oxidase (306 aa).

Residue serine 99 participates in substrate binding. The a divalent metal cation site is built by histidine 103 and histidine 113. Histidine 113 functions as the Proton donor in the catalytic mechanism. 115–117 (NVR) contacts substrate. A divalent metal cation is bound by residues histidine 152 and histidine 182. The important for dimerization stretch occupies residues 247 to 282 (YVEFNLVFDRGTLFGLQSGGRTESILMSMPPVANWR). 265 to 267 (GGR) is a substrate binding site.

The protein belongs to the aerobic coproporphyrinogen-III oxidase family. Homodimer. A divalent metal cation serves as cofactor.

It localises to the cytoplasm. The enzyme catalyses coproporphyrinogen III + O2 + 2 H(+) = protoporphyrinogen IX + 2 CO2 + 2 H2O. Its pathway is porphyrin-containing compound metabolism; protoporphyrin-IX biosynthesis; protoporphyrinogen-IX from coproporphyrinogen-III (O2 route): step 1/1. Functionally, involved in the heme biosynthesis. Catalyzes the aerobic oxidative decarboxylation of propionate groups of rings A and B of coproporphyrinogen-III to yield the vinyl groups in protoporphyrinogen-IX. The protein is Oxygen-dependent coproporphyrinogen-III oxidase of Burkholderia ambifaria (strain MC40-6).